The following is a 968-amino-acid chain: A disintegrin and metalloproteinase with thrombospondin motifs 1 (968 aa).

Disordered regions lie at residues 1 to 23 (MQPKVPLGSRKQKPCSDMGDVQR) and 177 to 253 (APAV…RKKR). A signal peptide spans 1 to 48 (MQPKVPLGSRKQKPCSDMGDVQRAARSRGSLSAHMLLLLLASITMLLC). A propeptide spanning residues 49–253 (ARGAHGRPTE…SGPGSIRKKR (205 aa)) is cleaved from the precursor. A Cysteine switch motif is present at residues 204-211 (AKCGVMDD). Cysteine 206 contributes to the Zn(2+) binding site. Over residues 214-229 (LPTSDSRPESQNTRNQ) the composition is skewed to polar residues. A Peptidase M12B domain is found at 259–468 (RYVETMLVAD…GHGECLMDKP (210 aa)). Ca(2+) contacts are provided by glutamate 262, aspartate 345, and aspartate 352. Disulfide bonds link cysteine 334–cysteine 386, cysteine 363–cysteine 368, cysteine 380–cysteine 463, and cysteine 418–cysteine 447. Residue histidine 402 coordinates Zn(2+). Residue glutamate 403 is part of the active site. Residues histidine 406 and histidine 412 each contribute to the Zn(2+) site. Positions 463 and 466 each coordinate Ca(2+). In terms of domain architecture, Disintegrin spans 477–559 (DLPGTLYDAN…TDMKHFATPV (83 aa)). 4 disulfide bridges follow: cysteine 489/cysteine 512, cysteine 500/cysteine 522, cysteine 507/cysteine 541, and cysteine 535/cysteine 546. Asparagine 548 carries an N-linked (GlcNAc...) asparagine glycan. The TSP type-1 1 domain occupies 560–615 (HGSWGPWGPWGDCSRTCGGGVQYTMRECDNPVPKNGGKYCEGKRVRYRSCNIEDCP). Cystine bridges form between cysteine 572-cysteine 609, cysteine 576-cysteine 614, and cysteine 587-cysteine 599. N-linked (GlcNAc...) asparagine glycans are attached at residues asparagine 721, asparagine 765, and asparagine 783. The tract at residues 726–850 (KKMSGIVTST…YFMKKKTESF (125 aa)) is spacer. 2 TSP type-1 domains span residues 855 to 911 (TFSE…LPCP) and 912 to 968 (HWQV…TQCS). N-linked (GlcNAc...) asparagine glycosylation occurs at asparagine 946.

It depends on Zn(2+) as a cofactor. Post-translationally, the precursor is cleaved by a furin endopeptidase. In terms of processing, glycosylated. Can be O-fucosylated by POFUT2 on a serine or a threonine residue found within the consensus sequence C1-X(2)-(S/T)-C2-G of the TSP type-1 repeat domains where C1 and C2 are the first and second cysteine residue of the repeat, respectively. Fucosylated repeats can then be further glycosylated by the addition of a beta-1,3-glucose residue by the glucosyltransferase, B3GALTL. Fucosylation mediates the efficient secretion of ADAMTS family members. Can also be C-glycosylated with one or two mannose molecules on tryptophan residues within the consensus sequence W-X-X-W of the TPRs, and N-glycosylated. These other glycosylations can also facilitate secretion.

The protein localises to the secreted. The protein resides in the extracellular space. It localises to the extracellular matrix. Functionally, metalloprotease which cleaves aggrecan, a cartilage proteoglycan, at the '1691-Glu-|-Leu-1692' site (within the chondroitin sulfate attachment domain), and may be involved in its turnover. Also cleaves COMP. Has angiogenic inhibitor activity. May play a critical role in follicular rupture. The protein is A disintegrin and metalloproteinase with thrombospondin motifs 1 (Adamts1) of Mus musculus (Mouse).